Consider the following 480-residue polypeptide: MTLIRTVLMAAALLGASAHAQGVVGKPFGFAAGTTGGGNAAPAAPSDIKELAQWLSDDTPRVILIDKEFDFTGSEGTCADCACCVPSSNTCGSSGQNAIETSFGWCGSSPNVTCTYDKAGTKGMDVGSDKSIVGVGSAGVIRGKGLRLTGGASNVIIQNIHITDINPEYIWGGDAISLDGTDKIWIDHVKISLVGRQMFVTGYESSGSVTISNSEFDGRTSWSASCDGHHYWTLLGLGKNEQITFARNYIHHTSGRSPKLGESSYWHSYNNYWSDNSGHAFDVESAGKSLIEGNVFSNVKTPLTKENLDGVFAVSADDESTCSGSLGRSCIPNVLTSSGELSSAGDGVFSGWLSDEGDLTLMPASQVASYVKAHAGVGKLGAGDYSSSAIPSSTPAPSSSALAKRHGGHDRHGLGHIPHLTEGGPGAWHTPGPAPSWSWRTIGVRSTALPTPSPSSSSCAIGKPTAGPPRFPIFGDLGIF.

The N-terminal stretch at 1 to 25 (MTLIRTVLMAAALLGASAHAQGVVG) is a signal peptide. Cysteines 83 and 106 form a disulfide. N111 is a glycosylation site (N-linked (GlcNAc...) asparagine). R256 is an active-site residue. A disulfide bond links C322 and C330. Over residues 386 to 401 (SSSAIPSSTPAPSSSA) the composition is skewed to low complexity. Residues 386-436 (SSSAIPSSTPAPSSSALAKRHGGHDRHGLGHIPHLTEGGPGAWHTPGPAPS) are disordered.

It belongs to the polysaccharide lyase 1 family.

The protein resides in the secreted. The enzyme catalyses Eliminative cleavage of (1-&gt;4)-alpha-D-galacturonan methyl ester to give oligosaccharides with 4-deoxy-6-O-methyl-alpha-D-galact-4-enuronosyl groups at their non-reducing ends.. In terms of biological role, pectinolytic enzymes consist of four classes of enzymes: pectin lyase, polygalacturonase, pectin methylesterase and rhamnogalacturonase. Among pectinolytic enzymes, pectin lyase is the most important in depolymerization of pectin, since it cleaves internal glycosidic bonds of highly methylated pectins. This Aspergillus terreus (strain NIH 2624 / FGSC A1156) protein is Probable pectin lyase F-2 (pelF-2).